Reading from the N-terminus, the 245-residue chain is 1-(5-phosphoribosyl)-5-[(5-phosphoribosylamino)methylideneamino] imidazole-4-carboxamide isomerase (245 aa).

D7 functions as the Proton acceptor in the catalytic mechanism. The Proton donor role is filled by D129.

It belongs to the HisA/HisF family.

The protein resides in the cytoplasm. It carries out the reaction 1-(5-phospho-beta-D-ribosyl)-5-[(5-phospho-beta-D-ribosylamino)methylideneamino]imidazole-4-carboxamide = 5-[(5-phospho-1-deoxy-D-ribulos-1-ylimino)methylamino]-1-(5-phospho-beta-D-ribosyl)imidazole-4-carboxamide. The protein operates within amino-acid biosynthesis; L-histidine biosynthesis; L-histidine from 5-phospho-alpha-D-ribose 1-diphosphate: step 4/9. This is 1-(5-phosphoribosyl)-5-[(5-phosphoribosylamino)methylideneamino] imidazole-4-carboxamide isomerase from Shewanella sp. (strain MR-4).